The sequence spans 109 residues: Movement protein TGB2 (109 aa).

Topologically, residues 1–9 (MPLTPPPDF) are cytoplasmic. A helical transmembrane segment spans residues 10-30 (TKVYLSAALGVSLALVVWLLI). The Lumenal portion of the chain corresponds to 31–72 (RSTLPVVGDRDHNLPHGGWYRDGTKSVFYNSPGRLNSIEARK). A helical transmembrane segment spans residues 73 to 93 (APLLGQPWAIVVLLVLLIWAS). Topologically, residues 94-109 (HKLGRPNCRACAGSHT) are cytoplasmic.

Belongs to the Tymovirales TGBp2 protein family.

The protein localises to the host endoplasmic reticulum membrane. Functionally, plays a role in viral cell-to-cell propagation, by facilitating genome transport to neighboring plant cells through plasmosdesmata,. This Solanum tuberosum (Potato) protein is Movement protein TGB2.